A 150-amino-acid chain; its full sequence is Large ribosomal subunit protein uL23 (150 aa).

Residues 1 to 24 are disordered; the sequence is MNKENKTQAVNKAKNTAKVAKKGS. Over residues 7-18 the composition is skewed to low complexity; it reads TQAVNKAKNTAK.

This sequence belongs to the universal ribosomal protein uL23 family.

This chain is Large ribosomal subunit protein uL23 (RPL23A), found in Tetrahymena thermophila (strain SB210).